A 242-amino-acid polypeptide reads, in one-letter code: Sugar fermentation stimulation protein homolog (242 aa).

This sequence belongs to the SfsA family.

The sequence is that of Sugar fermentation stimulation protein homolog from Methanosphaera stadtmanae (strain ATCC 43021 / DSM 3091 / JCM 11832 / MCB-3).